We begin with the raw amino-acid sequence, 180 residues long: NFWANSPFVLPKNEILAESEFAAPTITKLIPILFSTSGASLAYNVNLVADQFQRAFQTSTFCNRLYSFFNKRWFFDQVLNDFLVRSFLRFGYSVSFEALDKGAIEILGPYGISYTFRRLAERISQLQSGSVYHYAFAMLLGSTPFVTFSRMWDSLSSWVDSRSSFILLVSSFIINKSSQE.

The helical transmembrane segment at 131-148 (VYHYAFAMLLGSTPFVTF) threads the bilayer.

It belongs to the complex I subunit 5 family.

It is found in the mitochondrion inner membrane. It carries out the reaction a ubiquinone + NADH + 5 H(+)(in) = a ubiquinol + NAD(+) + 4 H(+)(out). In terms of biological role, core subunit of the mitochondrial membrane respiratory chain NADH dehydrogenase (Complex I) that is believed to belong to the minimal assembly required for catalysis. Complex I functions in the transfer of electrons from NADH to the respiratory chain. The immediate electron acceptor for the enzyme is believed to be ubiquinone. The sequence is that of NADH-ubiquinone oxidoreductase chain 5 (ND5) from Zea mays (Maize).